Here is a 246-residue protein sequence, read N- to C-terminus: Ribonuclease PH (246 aa).

Phosphate-binding positions include Arg-91 and 129 to 131 (GTR).

It belongs to the RNase PH family. As to quaternary structure, homohexameric ring arranged as a trimer of dimers.

The catalysed reaction is tRNA(n+1) + phosphate = tRNA(n) + a ribonucleoside 5'-diphosphate. Functionally, phosphorolytic 3'-5' exoribonuclease that plays an important role in tRNA 3'-end maturation. Removes nucleotide residues following the 3'-CCA terminus of tRNAs; can also add nucleotides to the ends of RNA molecules by using nucleoside diphosphates as substrates, but this may not be physiologically important. Probably plays a role in initiation of 16S rRNA degradation (leading to ribosome degradation) during starvation. This is Ribonuclease PH from Burkholderia vietnamiensis (strain G4 / LMG 22486) (Burkholderia cepacia (strain R1808)).